Here is a 98-residue protein sequence, read N- to C-terminus: Large ribosomal subunit protein eL21 (98 aa).

This sequence belongs to the eukaryotic ribosomal protein eL21 family.

In Methanocorpusculum labreanum (strain ATCC 43576 / DSM 4855 / Z), this protein is Large ribosomal subunit protein eL21.